We begin with the raw amino-acid sequence, 339 residues long: Glyceraldehyde-3-phosphate dehydrogenase (339 aa).

NAD(+)-binding positions include 12-13, Asp39, Arg84, and Ser127; that span reads RI. D-glyceraldehyde 3-phosphate contacts are provided by residues 157–159, Thr188, Arg203, 216–217, and Arg239; these read SCT and TG. Residue Cys158 is the Nucleophile of the active site. NAD(+) is bound at residue Asn320.

It belongs to the glyceraldehyde-3-phosphate dehydrogenase family. In terms of assembly, homotetramer.

The protein localises to the cytoplasm. It catalyses the reaction D-glyceraldehyde 3-phosphate + phosphate + NAD(+) = (2R)-3-phospho-glyceroyl phosphate + NADH + H(+). It participates in carbohydrate degradation; glycolysis; pyruvate from D-glyceraldehyde 3-phosphate: step 1/5. Its function is as follows. Catalyzes the oxidative phosphorylation of glyceraldehyde 3-phosphate (G3P) to 1,3-bisphosphoglycerate (BPG) using the cofactor NAD. The first reaction step involves the formation of a hemiacetal intermediate between G3P and a cysteine residue, and this hemiacetal intermediate is then oxidized to a thioester, with concomitant reduction of NAD to NADH. The reduced NADH is then exchanged with the second NAD, and the thioester is attacked by a nucleophilic inorganic phosphate to produce BPG. The chain is Glyceraldehyde-3-phosphate dehydrogenase (gap) from Mycobacterium bovis (strain ATCC BAA-935 / AF2122/97).